A 382-amino-acid polypeptide reads, in one-letter code: D-alanine--D-alanine ligase (382 aa).

Positions 139–348 constitute an ATP-grasp domain; sequence KRLMRDAGLP…PPALMDALIA (210 aa). 168-223 provides a ligand contact to ATP; it reads EALESRTLFVKPANMGSSVGVSRVADAGQFDQALAHAFAYDEKILIERAVPRAREI. Residues D300, E315, and N317 each contribute to the Mg(2+) site.

This sequence belongs to the D-alanine--D-alanine ligase family. The cofactor is Mg(2+). Mn(2+) is required as a cofactor.

The protein resides in the cytoplasm. The enzyme catalyses 2 D-alanine + ATP = D-alanyl-D-alanine + ADP + phosphate + H(+). It functions in the pathway cell wall biogenesis; peptidoglycan biosynthesis. In terms of biological role, cell wall formation. This is D-alanine--D-alanine ligase from Methylobacterium sp. (strain 4-46).